Consider the following 257-residue polypeptide: Thioesterase frbE (257 aa).

Belongs to the AMT4 thioesterase family.

It participates in antifungal biosynthesis. Its function is as follows. Thioesterase; part of the gene cluster that mediates the biosynthesis of the antifungal antibiotic FR901469, an inhibitor of beta-1,3-glucansynthase, exerting antifungal activity against the pathogenes Candida albicans and Aspergillus fumigatus. FR901469 is a cyclic depsipeptide containing 12 amino acid residues and a fatty acid chain. The NRPS frbI contains 12 modules responsible for the formation of the depsipeptide backbone which is denoted as Acyl-Thr-Ala-Tyr-Val-4OHPro-Thr-Thr-3OHPro-threo3OHGln-Gly-Thr-Orn-OH (C71H116N14O23). The PKS frbB is probably involved in the production of the hydrocarbon chain, and the acyl-CoA ligase frbC might be involved in the transport of the chain to the peptide ptoduct of frbI. Because FR901469 contains 3 hydroxylated amino acid residues, the 3 oxygenases frbA, frbH, and frbJ might be participating in amino acid hydroxylation. As no thioesterase domains were detected in frbI or frbB, the thioesterases frbD and frbE may instead release and cyclize the products of the NRPS and PKS, respectively. In Dothideomycetidae sp. (strain 11243) (Fungal sp. (strain No.11243)), this protein is Thioesterase frbE.